A 167-amino-acid chain; its full sequence is Small ribosomal subunit protein uS5 (167 aa).

The 64-residue stretch at 11-74 (LQEKLIAVNR…EKARRAMINV (64 aa)) folds into the S5 DRBM domain.

This sequence belongs to the universal ribosomal protein uS5 family. Part of the 30S ribosomal subunit. Contacts proteins S4 and S8.

In terms of biological role, with S4 and S12 plays an important role in translational accuracy. Functionally, located at the back of the 30S subunit body where it stabilizes the conformation of the head with respect to the body. This chain is Small ribosomal subunit protein uS5, found in Serratia proteamaculans (strain 568).